The primary structure comprises 132 residues: Probable histone H2A.2 (132 aa).

The protein belongs to the histone H2A family. As to quaternary structure, the nucleosome is a histone octamer containing two molecules each of H2A, H2B, H3 and H4 assembled in one H3-H4 heterotetramer and two H2A-H2B heterodimers. The octamer wraps approximately 147 bp of DNA. Not ubiquitinated. As to expression, expressed mainly in non-dividing tissues of the plant. Also found in meristems and dividing cells.

It localises to the nucleus. The protein resides in the chromosome. Functionally, core component of nucleosome. Nucleosomes wrap and compact DNA into chromatin, limiting DNA accessibility to the cellular machineries which require DNA as a template. Histones thereby play a central role in transcription regulation, DNA repair, DNA replication and chromosomal stability. DNA accessibility is regulated via a complex set of post-translational modifications of histones, also called histone code, and nucleosome remodeling. This is Probable histone H2A.2 from Arabidopsis thaliana (Mouse-ear cress).